Consider the following 612-residue polypeptide: DEAD-box ATP-dependent RNA helicase 11 (612 aa).

2 disordered regions span residues 1-70 (MSAS…SGGG) and 83-104 (GAGGGGGGGGGWNNRSGGWDRR). Serine 2 bears the N-acetylserine mark. Gly residues-rich tracts occupy residues 61 to 70 (SGGGGASGGG) and 83 to 94 (GAGGGGGGGGGW). The Q motif signature appears at 151-179 (NTFADIDLGDALNLNIRRCKYVRPTPVQR). One can recognise a Helicase ATP-binding domain in the interval 182–366 (IPILLAERDL…ADFMSNYIFL (185 aa)). 195–202 (AQTGSGKT) is a binding site for ATP. The DEAD box motif lies at 310-313 (DEAD). The Helicase C-terminal domain maps to 377–542 (LITQRVEFVQ…EVPEWLTRYA (166 aa)). The segment at 547–583 (FGGGKKRSGGRFGGRDFRREGSYSRGGGGGGGGGGSD) is disordered. Basic and acidic residues predominate over residues 559 to 568 (GGRDFRREGS). Over residues 570–583 (SRGGGGGGGGGGSD) the composition is skewed to gly residues.

This sequence belongs to the DEAD box helicase family. DDX3/DED1 subfamily.

It carries out the reaction ATP + H2O = ADP + phosphate + H(+). The chain is DEAD-box ATP-dependent RNA helicase 11 (RH11) from Arabidopsis thaliana (Mouse-ear cress).